The primary structure comprises 190 residues: NADH-quinone oxidoreductase subunit B (190 aa).

[4Fe-4S] cluster is bound by residues cysteine 67, cysteine 68, cysteine 132, and cysteine 162.

It belongs to the complex I 20 kDa subunit family. As to quaternary structure, NDH-1 is composed of 14 different subunits. Subunits NuoB, C, D, E, F, and G constitute the peripheral sector of the complex. The cofactor is [4Fe-4S] cluster.

Its subcellular location is the cell inner membrane. It carries out the reaction a quinone + NADH + 5 H(+)(in) = a quinol + NAD(+) + 4 H(+)(out). Its function is as follows. NDH-1 shuttles electrons from NADH, via FMN and iron-sulfur (Fe-S) centers, to quinones in the respiratory chain. The immediate electron acceptor for the enzyme in this species is believed to be ubiquinone. Couples the redox reaction to proton translocation (for every two electrons transferred, four hydrogen ions are translocated across the cytoplasmic membrane), and thus conserves the redox energy in a proton gradient. The polypeptide is NADH-quinone oxidoreductase subunit B (Anaplasma marginale (strain Florida)).